The primary structure comprises 187 residues: Probable nicotinate-nucleotide adenylyltransferase (187 aa).

This sequence belongs to the NadD family.

It catalyses the reaction nicotinate beta-D-ribonucleotide + ATP + H(+) = deamido-NAD(+) + diphosphate. It participates in cofactor biosynthesis; NAD(+) biosynthesis; deamido-NAD(+) from nicotinate D-ribonucleotide: step 1/1. Catalyzes the reversible adenylation of nicotinate mononucleotide (NaMN) to nicotinic acid adenine dinucleotide (NaAD). In Anaeromyxobacter dehalogenans (strain 2CP-C), this protein is Probable nicotinate-nucleotide adenylyltransferase.